The sequence spans 161 residues: Vitamin K epoxide reductase complex subunit 1 (161 aa).

Over 1–9 (MGTTWRSPG) the chain is Cytoplasmic. A helical transmembrane segment spans residues 10-29 (RLRLALCLAGLALSLYALHV). The Lumenal portion of the chain corresponds to 30–80 (KAARARNEDYRALCDVGTAISCSRVFSSRWGRGFGLVEHVLGADSILNQSN). C43 and C51 are disulfide-bonded. N80 is a (S)-warfarin binding site. A helical membrane pass occupies residues 81-95 (SIFGCMFYTIQLLLG). Topologically, residues 96–100 (CLRGR) are cytoplasmic. A helical membrane pass occupies residues 101 to 128 (WASILLILSSLVSVAGSLYLAWILFFVL). At 129-131 (YDF) the chain is on the lumenal side. C132 and C135 form a disulfide bridge. A helical membrane pass occupies residues 132–153 (CIVCITTYAINAGLMLLSFQKV). Positions 135 and 139 each coordinate phylloquinone. A (S)-warfarin-binding site is contributed by Y139. The Cytoplasmic segment spans residues 154–161 (PEHKVKKP).

It belongs to the VKOR family. Highly expressed in liver. Detected at lower levels in lung, kidney and testis.

Its subcellular location is the endoplasmic reticulum membrane. The catalysed reaction is phylloquinone + [protein]-disulfide + H2O = 2,3-epoxyphylloquinone + [protein]-dithiol. It carries out the reaction phylloquinol + [protein]-disulfide = phylloquinone + [protein]-dithiol. With respect to regulation, inhibited by warfarin (coumadin). Warfarin locks VKORC1 in both redox states into the closed conformation. Its function is as follows. Involved in vitamin K metabolism. Catalytic subunit of the vitamin K epoxide reductase (VKOR) complex which reduces inactive vitamin K 2,3-epoxide to active vitamin K. Vitamin K is required for the gamma-carboxylation of various proteins, including clotting factors, and is required for normal blood coagulation, but also for normal bone development. This Rattus norvegicus (Rat) protein is Vitamin K epoxide reductase complex subunit 1 (Vkorc1).